Reading from the N-terminus, the 347-residue chain is Dual specificity mitogen-activated protein kinase kinase 3 (347 aa).

Met1 is modified (N-acetylmethionine). The segment covering 1–15 (MESPASSQPASMPQS) has biased composition (low complexity). Residues 1-46 (MESPASSQPASMPQSKGKSKRKKDLRISCMSKPPAPNPTPPRNLDS) form a disordered region. A phosphoserine mark is found at Ser3 and Ser15. Residues 64–325 (LVTISELGRG…YLELMEHPFF (262 aa)) enclose the Protein kinase domain. ATP is bound by residues 70 to 78 (LGRGAYGVV) and Lys93. Asp190 (proton acceptor) is an active-site residue. Ser218 carries the post-translational modification Phosphoserine. The residue at position 222 (Thr222) is a Phosphothreonine.

This sequence belongs to the protein kinase superfamily. STE Ser/Thr protein kinase family. MAP kinase kinase subfamily. Component of a signaling complex containing at least AKAP13, PKN1, MAPK14, ZAK and MAP2K3. Within this complex, AKAP13 interacts directly with PKN1, which in turn recruits MAPK14, MAP2K3 and ZAK. Binds to DYRK1B/MIRK and increases its kinase activity. Part of a complex with MAP3K3, RAC1 and CCM2. Interacts with ARRB1. As to quaternary structure, (Microbial infection) Interacts with Yersinia YopJ. Autophosphorylated. Phosphorylation on Ser-218 and Thr-222 by MAP kinase kinase kinases positively regulates the kinase activity. Phosphorylated by TAOK2. In terms of processing, (Microbial infection) Yersinia YopJ may acetylate Ser/Thr residues, preventing phosphorylation and activation, thus blocking the MAPK signaling pathway. As to expression, abundant expression is seen in the skeletal muscle. It is also widely expressed in other tissues.

The catalysed reaction is L-seryl-[protein] + ATP = O-phospho-L-seryl-[protein] + ADP + H(+). It catalyses the reaction L-threonyl-[protein] + ATP = O-phospho-L-threonyl-[protein] + ADP + H(+). The enzyme catalyses L-tyrosyl-[protein] + ATP = O-phospho-L-tyrosyl-[protein] + ADP + H(+). Its activity is regulated as follows. Activated by dual phosphorylation on Ser-218 and Thr-222. Dual specificity kinase. Is activated by cytokines and environmental stress in vivo. Catalyzes the concomitant phosphorylation of a threonine and a tyrosine residue in the MAP kinase p38. Part of a signaling cascade that begins with the activation of the adrenergic receptor ADRA1B and leads to the activation of MAPK14. This chain is Dual specificity mitogen-activated protein kinase kinase 3 (MAP2K3), found in Homo sapiens (Human).